A 355-amino-acid chain; its full sequence is Probable nitronate monooxygenase (355 aa).

FMN contacts are provided by residues Asn-71, Gln-175, Gly-180, Gly-218, and 237-240; that span reads QMGT.

Belongs to the nitronate monooxygenase family. NMO class I subfamily. Requires FMN as cofactor.

It catalyses the reaction 3 propionate 3-nitronate + 3 O2 + H2O = 3 3-oxopropanoate + 2 nitrate + nitrite + H2O2 + 3 H(+). Its function is as follows. Nitronate monooxygenase that uses molecular oxygen to catalyze the oxidative denitrification of alkyl nitronates. Acts on propionate 3-nitronate (P3N), the presumed physiological substrate. Probably functions in the detoxification of P3N, a metabolic poison produced by plants and fungi as a defense mechanism. The sequence is that of Probable nitronate monooxygenase from Staphylococcus aureus (strain USA300).